Here is a 228-residue protein sequence, read N- to C-terminus: Isonitrile hydratase (228 aa).

The active site involves Cys101.

As to quaternary structure, homodimer.

The enzyme catalyses N-cyclohexylformamide = cyclohexyl isocyanide + H2O. Its activity is regulated as follows. Sensitive to thiol reagents and oxidizing reagents, but is not influenced by chelators or reducing reagents. Catalyzes the hydration of cyclohexyl isocyanide to N-cyclohexylformamide. Acts on various isonitriles, but not on nitriles or amides. Probably involved in detoxification. The protein is Isonitrile hydratase (inhA) of Pseudomonas putida (Arthrobacter siderocapsulatus).